We begin with the raw amino-acid sequence, 384 residues long: Cysteine protease ATG4B (384 aa).

Cysteine 74 (nucleophile) is an active-site residue. Active-site residues include aspartate 269 and histidine 271. The LIR signature appears at 379–382; that stretch reads FEIL.

This sequence belongs to the peptidase C54 family.

It is found in the cytoplasm. The protein resides in the cytosol. The protein localises to the cytoplasmic vesicle. It localises to the autophagosome. Its subcellular location is the endoplasmic reticulum. It is found in the mitochondrion. It carries out the reaction [protein]-C-terminal L-amino acid-glycyl-phosphatidylethanolamide + H2O = [protein]-C-terminal L-amino acid-glycine + a 1,2-diacyl-sn-glycero-3-phosphoethanolamine. It catalyses the reaction [protein]-C-terminal L-amino acid-glycyl-phosphatidylserine + H2O = [protein]-C-terminal L-amino acid-glycine + a 1,2-diacyl-sn-glycero-3-phospho-L-serine. Functionally, cysteine protease that plays a key role in autophagy by mediating both proteolytic activation and delipidation of ATG8 family proteins. Required for canonical autophagy (macroautophagy), non-canonical autophagy as well as for mitophagy. The protease activity is required for proteolytic activation of ATG8 family proteins: cleaves the C-terminal amino acid of ATG8 proteins to reveal a C-terminal glycine. Exposure of the glycine at the C-terminus is essential for ATG8 proteins conjugation to phosphatidylethanolamine (PE) and insertion to membranes, which is necessary for autophagy. Protease activity is also required to counteract formation of high-molecular weight conjugates of ATG8 proteins (ATG8ylation): acts as a deubiquitinating-like enzyme that removes ATG8 conjugated to other proteins, such as ATG3. In addition to the protease activity, also mediates delipidation of ATG8 family proteins. Catalyzes delipidation of PE-conjugated forms of ATG8 proteins during macroautophagy. Also involved in non-canonical autophagy, a parallel pathway involving conjugation of ATG8 proteins to single membranes at endolysosomal compartments, by catalyzing delipidation of ATG8 proteins conjugated to phosphatidylserine (PS). The chain is Cysteine protease ATG4B from Xenopus laevis (African clawed frog).